A 430-amino-acid chain; its full sequence is Enolase (430 aa).

Gln-163 provides a ligand contact to (2R)-2-phosphoglycerate. Glu-205 (proton donor) is an active-site residue. Mg(2+)-binding residues include Asp-242, Glu-287, and Asp-314. The (2R)-2-phosphoglycerate site is built by Lys-339, Arg-368, Ser-369, and Lys-390. Lys-339 (proton acceptor) is an active-site residue.

This sequence belongs to the enolase family. It depends on Mg(2+) as a cofactor.

The protein localises to the cytoplasm. It localises to the secreted. It is found in the cell surface. The catalysed reaction is (2R)-2-phosphoglycerate = phosphoenolpyruvate + H2O. It participates in carbohydrate degradation; glycolysis; pyruvate from D-glyceraldehyde 3-phosphate: step 4/5. Catalyzes the reversible conversion of 2-phosphoglycerate (2-PG) into phosphoenolpyruvate (PEP). It is essential for the degradation of carbohydrates via glycolysis. This chain is Enolase, found in Geobacillus kaustophilus (strain HTA426).